A 445-amino-acid chain; its full sequence is Xylose isomerase (445 aa).

Active-site residues include histidine 107 and aspartate 110. Mg(2+) contacts are provided by glutamate 238, glutamate 274, histidine 277, aspartate 302, aspartate 313, aspartate 315, and aspartate 345.

This sequence belongs to the xylose isomerase family. In terms of assembly, homotetramer. Mg(2+) is required as a cofactor.

It is found in the cytoplasm. The catalysed reaction is alpha-D-xylose = alpha-D-xylulofuranose. This Bacillus cereus (strain ATCC 10987 / NRS 248) protein is Xylose isomerase.